The primary structure comprises 199 residues: dITP/XTP pyrophosphatase (199 aa).

12–17 (SGNAGK) serves as a coordination point for substrate. Catalysis depends on aspartate 73, which acts as the Proton acceptor. Position 73 (aspartate 73) interacts with Mg(2+). Residues serine 74, 157-160 (FGYD), lysine 180, and 185-186 (HR) each bind substrate.

It belongs to the HAM1 NTPase family. In terms of assembly, homodimer. Mg(2+) serves as cofactor.

It carries out the reaction XTP + H2O = XMP + diphosphate + H(+). The catalysed reaction is dITP + H2O = dIMP + diphosphate + H(+). It catalyses the reaction ITP + H2O = IMP + diphosphate + H(+). Its function is as follows. Pyrophosphatase that catalyzes the hydrolysis of nucleoside triphosphates to their monophosphate derivatives, with a high preference for the non-canonical purine nucleotides XTP (xanthosine triphosphate), dITP (deoxyinosine triphosphate) and ITP. Seems to function as a house-cleaning enzyme that removes non-canonical purine nucleotides from the nucleotide pool, thus preventing their incorporation into DNA/RNA and avoiding chromosomal lesions. The polypeptide is dITP/XTP pyrophosphatase (Neisseria meningitidis serogroup B (strain ATCC BAA-335 / MC58)).